Here is a 539-residue protein sequence, read N- to C-terminus: Chaperonin GroEL (539 aa).

ATP-binding positions include 29 to 32 (TIGP), 86 to 90 (DGTTT), G413, 476 to 478 (NAA), and D492.

This sequence belongs to the chaperonin (HSP60) family. As to quaternary structure, forms a cylinder of 14 subunits composed of two heptameric rings stacked back-to-back. Interacts with the co-chaperonin GroES.

The protein localises to the cytoplasm. The enzyme catalyses ATP + H2O + a folded polypeptide = ADP + phosphate + an unfolded polypeptide.. Together with its co-chaperonin GroES, plays an essential role in assisting protein folding. The GroEL-GroES system forms a nano-cage that allows encapsulation of the non-native substrate proteins and provides a physical environment optimized to promote and accelerate protein folding. The chain is Chaperonin GroEL from Staphylococcus haemolyticus (strain JCSC1435).